A 361-amino-acid polypeptide reads, in one-letter code: MEKKMFNSLMKIHQKYQDLKQLLETDQILNDQKQYLQIAKEIASITEIIEVFQKFLDDQKVLEDAKTILIQEDDPELIQLAKVEIATMSKNIEEYEKKLLILMLPKDKNDEKDVIVEIRGAAGGDEANIFVGDLFKMYHKWADSQKAKVKVLSSSLALAGGFSQIIFQISGQKIYSKLKFESGVHRVQRVPATETMGRIHTSTATVTVMPKIDEKIEIEINPSDLKIDTYRSSGAGGQSVNTTDSAVRITHIPTGIVVTSQDERSQIGNKEIAMGILKSKIYNLELQKQQQKQSDFRKLAGSGARSEKIRTYNYPQDRLTDHRINFSTSLKPIIQGNLNPIIEALLAQEKTELILQNYANK.

Q238 is modified (N5-methylglutamine).

The protein belongs to the prokaryotic/mitochondrial release factor family. In terms of processing, methylated by PrmC. Methylation increases the termination efficiency of RF1.

It localises to the cytoplasm. In terms of biological role, peptide chain release factor 1 directs the termination of translation in response to the peptide chain termination codons UAG and UAA. This chain is Peptide chain release factor 1, found in Mesomycoplasma hyopneumoniae (strain 232) (Mycoplasma hyopneumoniae).